The sequence spans 398 residues: Enoyl-[acyl-carrier-protein] reductase [NADH] (398 aa).

NAD(+) is bound by residues 48 to 53 (GSSTGY), 74 to 75 (FE), 111 to 112 (DA), and 139 to 140 (LA). Residue Tyr-225 coordinates substrate. Tyr-235 acts as the Proton donor in catalysis. NAD(+) contacts are provided by residues Lys-244 and 273–275 (VVT).

It belongs to the TER reductase family. Monomer.

It carries out the reaction a 2,3-saturated acyl-[ACP] + NAD(+) = a (2E)-enoyl-[ACP] + NADH + H(+). It functions in the pathway lipid metabolism; fatty acid biosynthesis. Functionally, involved in the final reduction of the elongation cycle of fatty acid synthesis (FAS II). Catalyzes the reduction of a carbon-carbon double bond in an enoyl moiety that is covalently linked to an acyl carrier protein (ACP). This chain is Enoyl-[acyl-carrier-protein] reductase [NADH], found in Pseudomonas aeruginosa (strain UCBPP-PA14).